We begin with the raw amino-acid sequence, 317 residues long: Acetyl-coenzyme A carboxylase carboxyl transferase subunit alpha (317 aa).

Residues 37 to 292 (EINKKLEQTK…ADYITKGYNE (256 aa)) enclose the CoA carboxyltransferase C-terminal domain.

Belongs to the AccA family. Acetyl-CoA carboxylase is a heterohexamer composed of biotin carboxyl carrier protein (AccB), biotin carboxylase (AccC) and two subunits each of ACCase subunit alpha (AccA) and ACCase subunit beta (AccD).

It is found in the cytoplasm. It catalyses the reaction N(6)-carboxybiotinyl-L-lysyl-[protein] + acetyl-CoA = N(6)-biotinyl-L-lysyl-[protein] + malonyl-CoA. The protein operates within lipid metabolism; malonyl-CoA biosynthesis; malonyl-CoA from acetyl-CoA: step 1/1. Its function is as follows. Component of the acetyl coenzyme A carboxylase (ACC) complex. First, biotin carboxylase catalyzes the carboxylation of biotin on its carrier protein (BCCP) and then the CO(2) group is transferred by the carboxyltransferase to acetyl-CoA to form malonyl-CoA. The polypeptide is Acetyl-coenzyme A carboxylase carboxyl transferase subunit alpha (Flavobacterium johnsoniae (strain ATCC 17061 / DSM 2064 / JCM 8514 / BCRC 14874 / CCUG 350202 / NBRC 14942 / NCIMB 11054 / UW101) (Cytophaga johnsonae)).